The sequence spans 641 residues: Chaperone protein DnaK (641 aa).

Thr199 bears the Phosphothreonine; by autocatalysis mark. The span at 603–613 shows a compositional bias: polar residues; it reads YTQQGGTAGSE. A disordered region spans residues 603–641; that stretch reads YTQQGGTAGSETHSHEKAGGSGGDDVVDAEFEEVRDDKR. A compositionally biased stretch (acidic residues) spans 627-641; it reads DVVDAEFEEVRDDKR.

The protein belongs to the heat shock protein 70 family.

Acts as a chaperone. This chain is Chaperone protein DnaK, found in Methylococcus capsulatus (strain ATCC 33009 / NCIMB 11132 / Bath).